Consider the following 258-residue polypeptide: Imidazole glycerol phosphate synthase subunit HisF (258 aa).

Residues Asp11 and Asp130 contribute to the active site.

Belongs to the HisA/HisF family. Heterodimer of HisH and HisF.

It is found in the cytoplasm. The enzyme catalyses 5-[(5-phospho-1-deoxy-D-ribulos-1-ylimino)methylamino]-1-(5-phospho-beta-D-ribosyl)imidazole-4-carboxamide + L-glutamine = D-erythro-1-(imidazol-4-yl)glycerol 3-phosphate + 5-amino-1-(5-phospho-beta-D-ribosyl)imidazole-4-carboxamide + L-glutamate + H(+). It functions in the pathway amino-acid biosynthesis; L-histidine biosynthesis; L-histidine from 5-phospho-alpha-D-ribose 1-diphosphate: step 5/9. In terms of biological role, IGPS catalyzes the conversion of PRFAR and glutamine to IGP, AICAR and glutamate. The HisF subunit catalyzes the cyclization activity that produces IGP and AICAR from PRFAR using the ammonia provided by the HisH subunit. The protein is Imidazole glycerol phosphate synthase subunit HisF of Baumannia cicadellinicola subsp. Homalodisca coagulata.